A 261-amino-acid chain; its full sequence is Cytochrome c oxidase subunit 3 (261 aa).

Over 1–15 the chain is Mitochondrial matrix; the sequence is MTKQMHAFHMVNPSP. A helical transmembrane segment spans residues 16–34; that stretch reads WPLTGAASAFMLTSGLAMW. At 35 to 40 the chain is on the mitochondrial intermembrane side; sequence FHKHSN. Residues 41-66 form a helical membrane-spanning segment; sequence TLIFLSMILMLLTMYQWWRDITREGT. Over 67 to 72 the chain is Mitochondrial matrix; that stretch reads FQGHHT. The helical transmembrane segment at 73–105 threads the bilayer; sequence SLVQKSLRYGMILFIVSEVCFFFGFFWTFYHSS. Topologically, residues 106–128 are mitochondrial intermembrane; that stretch reads LSPSPDLGMMWPPKGVIPLDPFE. Residues 129 to 152 traverse the membrane as a helical segment; the sequence is IPLLNTAILLGSGVSVTWAHHSLM. At 153–155 the chain is on the mitochondrial matrix side; sequence EKT. The helical transmembrane segment at 156–183 threads the bilayer; that stretch reads HKDMVISLSITIILGIYFTLLQGMEYFN. Residues 184-190 are Mitochondrial intermembrane-facing; it reads STFNISD. A helical transmembrane segment spans residues 191-223; sequence NAYGSTFFVATGFHGGHVIIGTLFLTVCLLRQL. At 224-232 the chain is on the mitochondrial matrix side; the sequence is MFHFTSSHH. Residues 233-256 form a helical membrane-spanning segment; that stretch reads FGFEAAAWYWHFVDVVWLFLFISI. Topologically, residues 257-261 are mitochondrial intermembrane; it reads YWWGS.

It belongs to the cytochrome c oxidase subunit 3 family. Component of the cytochrome c oxidase (complex IV, CIV), a multisubunit enzyme composed of 14 subunits. The complex is composed of a catalytic core of 3 subunits MT-CO1, MT-CO2 and MT-CO3, encoded in the mitochondrial DNA, and 11 supernumerary subunits COX4I, COX5A, COX5B, COX6A, COX6B, COX6C, COX7A, COX7B, COX7C, COX8 and NDUFA4, which are encoded in the nuclear genome. The complex exists as a monomer or a dimer and forms supercomplexes (SCs) in the inner mitochondrial membrane with NADH-ubiquinone oxidoreductase (complex I, CI) and ubiquinol-cytochrome c oxidoreductase (cytochrome b-c1 complex, complex III, CIII), resulting in different assemblies (supercomplex SCI(1)III(2)IV(1) and megacomplex MCI(2)III(2)IV(2)).

It localises to the mitochondrion inner membrane. The enzyme catalyses 4 Fe(II)-[cytochrome c] + O2 + 8 H(+)(in) = 4 Fe(III)-[cytochrome c] + 2 H2O + 4 H(+)(out). In terms of biological role, component of the cytochrome c oxidase, the last enzyme in the mitochondrial electron transport chain which drives oxidative phosphorylation. The respiratory chain contains 3 multisubunit complexes succinate dehydrogenase (complex II, CII), ubiquinol-cytochrome c oxidoreductase (cytochrome b-c1 complex, complex III, CIII) and cytochrome c oxidase (complex IV, CIV), that cooperate to transfer electrons derived from NADH and succinate to molecular oxygen, creating an electrochemical gradient over the inner membrane that drives transmembrane transport and the ATP synthase. Cytochrome c oxidase is the component of the respiratory chain that catalyzes the reduction of oxygen to water. Electrons originating from reduced cytochrome c in the intermembrane space (IMS) are transferred via the dinuclear copper A center (CU(A)) of subunit 2 and heme A of subunit 1 to the active site in subunit 1, a binuclear center (BNC) formed by heme A3 and copper B (CU(B)). The BNC reduces molecular oxygen to 2 water molecules using 4 electrons from cytochrome c in the IMS and 4 protons from the mitochondrial matrix. This Myxine glutinosa (Atlantic hagfish) protein is Cytochrome c oxidase subunit 3 (MT-CO3).